A 199-amino-acid polypeptide reads, in one-letter code: Prolactin-2 (199 aa).

3 disulfides stabilise this stretch: C4–C11, C58–C174, and C191–C199.

It belongs to the somatotropin/prolactin family.

The protein localises to the secreted. The chain is Prolactin-2 from Alligator mississippiensis (American alligator).